Reading from the N-terminus, the 295-residue chain is Bifunctional protein FolD (295 aa).

NADP(+)-binding positions include 166–168 (GRS), S191, and I232.

Belongs to the tetrahydrofolate dehydrogenase/cyclohydrolase family. As to quaternary structure, homodimer.

It catalyses the reaction (6R)-5,10-methylene-5,6,7,8-tetrahydrofolate + NADP(+) = (6R)-5,10-methenyltetrahydrofolate + NADPH. It carries out the reaction (6R)-5,10-methenyltetrahydrofolate + H2O = (6R)-10-formyltetrahydrofolate + H(+). The protein operates within one-carbon metabolism; tetrahydrofolate interconversion. Its function is as follows. Catalyzes the oxidation of 5,10-methylenetetrahydrofolate to 5,10-methenyltetrahydrofolate and then the hydrolysis of 5,10-methenyltetrahydrofolate to 10-formyltetrahydrofolate. The sequence is that of Bifunctional protein FolD from Rhodopseudomonas palustris (strain BisB18).